Consider the following 1117-residue polypeptide: Lid2 complex component snt2 (1117 aa).

A BAH domain is found at 89 to 208 (ELIQPNDFVL…QNINKVFDVV (120 aa)). Residues 227 to 282 (NYDFIVTEYGKGRALLNEPSNCKVCKKWCAFDFSVQCADCKKYYHMDCVVPPLLKK) form a Phorbol-ester/DAG-type zinc finger. The PHD-type 1 zinc finger occupies 245–297 (PSNCKVCKKWCAFDFSVQCADCKKYYHMDCVVPPLLKKPPHGFGWTCATCSFA). Positions 361 to 380 (SSRNLHQQSRKSLDENKPNS) are disordered. Residues 798–882 (KKCCALCGIV…SWACLSCRSN (85 aa)) form a PHD-type 2 zinc finger. A C2HC pre-PHD-type zinc finger spans residues 890-925 (DNHCVLCLQSASHSLMKKTVEGNWVHLICASWTPDV). A PHD-type 3; degenerate zinc finger spans residues 948–1002 (KKCEVCGNSFGVCVSSPNSGLTSHVTCAEKANWYLGFEFVKQDQSPFSMLSNLKS).

As to quaternary structure, component of the Lid2 complex composed of ash2, jmj3, lid2, sdc1 and snt2.

It is found in the nucleus. This chain is Lid2 complex component snt2 (snt2), found in Schizosaccharomyces pombe (strain 972 / ATCC 24843) (Fission yeast).